We begin with the raw amino-acid sequence, 366 residues long: Ribosomal RNA large subunit methyltransferase M (366 aa).

Residues serine 188, 221–224 (CPGG), aspartate 240, aspartate 260, and aspartate 277 contribute to the S-adenosyl-L-methionine site. Residue lysine 306 is the Proton acceptor of the active site.

It belongs to the class I-like SAM-binding methyltransferase superfamily. RNA methyltransferase RlmE family. RlmM subfamily. In terms of assembly, monomer.

It is found in the cytoplasm. It catalyses the reaction cytidine(2498) in 23S rRNA + S-adenosyl-L-methionine = 2'-O-methylcytidine(2498) in 23S rRNA + S-adenosyl-L-homocysteine + H(+). In terms of biological role, catalyzes the 2'-O-methylation at nucleotide C2498 in 23S rRNA. The protein is Ribosomal RNA large subunit methyltransferase M of Erwinia tasmaniensis (strain DSM 17950 / CFBP 7177 / CIP 109463 / NCPPB 4357 / Et1/99).